A 252-amino-acid polypeptide reads, in one-letter code: tRNA (guanine-N(7)-)-methyltransferase (252 aa).

Residues Glu-75, Glu-100, Asp-127, and Asp-150 each coordinate S-adenosyl-L-methionine. Residue Asp-150 is part of the active site. Lys-154 lines the substrate pocket. The segment at 156–161 (RHNKRR) is interaction with RNA. Residues Asp-186 and 223–226 (THFE) contribute to the substrate site.

This sequence belongs to the class I-like SAM-binding methyltransferase superfamily. TrmB family.

It catalyses the reaction guanosine(46) in tRNA + S-adenosyl-L-methionine = N(7)-methylguanosine(46) in tRNA + S-adenosyl-L-homocysteine. Its pathway is tRNA modification; N(7)-methylguanine-tRNA biosynthesis. Functionally, catalyzes the formation of N(7)-methylguanine at position 46 (m7G46) in tRNA. The chain is tRNA (guanine-N(7)-)-methyltransferase from Xanthomonas oryzae pv. oryzae (strain MAFF 311018).